Consider the following 436-residue polypeptide: 3-ketoacyl-CoA thiolase (436 aa).

Catalysis depends on Cys-99, which acts as the Acyl-thioester intermediate. Catalysis depends on proton acceptor residues His-392 and Cys-422.

The protein belongs to the thiolase-like superfamily. Thiolase family. Heterotetramer of two alpha chains (FadJ) and two beta chains (FadI).

It localises to the cytoplasm. The enzyme catalyses an acyl-CoA + acetyl-CoA = a 3-oxoacyl-CoA + CoA. The protein operates within lipid metabolism; fatty acid beta-oxidation. Functionally, catalyzes the final step of fatty acid oxidation in which acetyl-CoA is released and the CoA ester of a fatty acid two carbons shorter is formed. The protein is 3-ketoacyl-CoA thiolase of Yersinia pseudotuberculosis serotype O:1b (strain IP 31758).